Here is a 511-residue protein sequence, read N- to C-terminus: Putative thymidine phosphorylase (511 aa).

It belongs to the thymidine/pyrimidine-nucleoside phosphorylase family. Type 2 subfamily.

It catalyses the reaction thymidine + phosphate = 2-deoxy-alpha-D-ribose 1-phosphate + thymine. The sequence is that of Putative thymidine phosphorylase from Bradyrhizobium sp. (strain BTAi1 / ATCC BAA-1182).